Reading from the N-terminus, the 171-residue chain is Putative phosphoesterase BH1439 (171 aa).

The active-site Proton donor is the histidine 34. 2 short sequence motifs (HXTX) span residues 34–37 (HVTL) and 115–118 (HLTI). Residue histidine 115 is the Proton acceptor of the active site.

It belongs to the 2H phosphoesterase superfamily. YjcG family.

The protein is Putative phosphoesterase BH1439 of Halalkalibacterium halodurans (strain ATCC BAA-125 / DSM 18197 / FERM 7344 / JCM 9153 / C-125) (Bacillus halodurans).